We begin with the raw amino-acid sequence, 233 residues long: 2,3,4,5-tetrahydropyridine-2,6-dicarboxylate N-acetyltransferase (233 aa).

The protein belongs to the transferase hexapeptide repeat family. DapH subfamily.

The catalysed reaction is (S)-2,3,4,5-tetrahydrodipicolinate + acetyl-CoA + H2O = L-2-acetamido-6-oxoheptanedioate + CoA. It participates in amino-acid biosynthesis; L-lysine biosynthesis via DAP pathway; LL-2,6-diaminopimelate from (S)-tetrahydrodipicolinate (acetylase route): step 1/3. In terms of biological role, catalyzes the transfer of an acetyl group from acetyl-CoA to tetrahydrodipicolinate. The sequence is that of 2,3,4,5-tetrahydropyridine-2,6-dicarboxylate N-acetyltransferase from Thermotoga sp. (strain RQ2).